Reading from the N-terminus, the 246-residue chain is DNA repair protein RecO (246 aa).

This sequence belongs to the RecO family.

Its function is as follows. Involved in DNA repair and RecF pathway recombination. This chain is DNA repair protein RecO, found in Proteus mirabilis (strain HI4320).